Reading from the N-terminus, the 98-residue chain is Large ribosomal subunit protein bL21 (98 aa).

It belongs to the bacterial ribosomal protein bL21 family. Part of the 50S ribosomal subunit. Contacts protein L20.

Its function is as follows. This protein binds to 23S rRNA in the presence of protein L20. The chain is Large ribosomal subunit protein bL21 from Aquifex aeolicus (strain VF5).